The chain runs to 273 residues: Large ribosomal subunit protein uL2 (273 aa).

A disordered region spans residues 228–273; sequence VDHPHGGGEGKTSGGRHPVTPWGFPTKGKKTRKNKRTSKFIVKKRK. Basic residues predominate over residues 254-273; that stretch reads KGKKTRKNKRTSKFIVKKRK.

This sequence belongs to the universal ribosomal protein uL2 family. In terms of assembly, part of the 50S ribosomal subunit. Forms a bridge to the 30S subunit in the 70S ribosome.

One of the primary rRNA binding proteins. Required for association of the 30S and 50S subunits to form the 70S ribosome, for tRNA binding and peptide bond formation. It has been suggested to have peptidyltransferase activity; this is somewhat controversial. Makes several contacts with the 16S rRNA in the 70S ribosome. This Rickettsia africae (strain ESF-5) protein is Large ribosomal subunit protein uL2.